The sequence spans 225 residues: Cytidylate kinase (225 aa).

12 to 20 (GPSGAGKGT) is a binding site for ATP.

The protein belongs to the cytidylate kinase family. Type 1 subfamily.

It is found in the cytoplasm. The catalysed reaction is CMP + ATP = CDP + ADP. It catalyses the reaction dCMP + ATP = dCDP + ADP. This Stenotrophomonas maltophilia (strain K279a) protein is Cytidylate kinase.